We begin with the raw amino-acid sequence, 676 residues long: Cysteine-rich receptor-like protein kinase 4 (676 aa).

The N-terminal stretch at 1–16 (MSFFWLFPFLLHLSFA) is a signal peptide. Residues 17 to 287 (DSLSPLSAPV…ISERGKGRNS (271 aa)) lie on the Extracellular side of the membrane. Gnk2-homologous domains lie at 31–135 (HLNH…HRNI) and 146–246 (ILLN…NYSF). N-linked (GlcNAc...) asparagine glycans are attached at residues asparagine 33, asparagine 46, asparagine 64, asparagine 152, asparagine 181, asparagine 243, and asparagine 248. Residues 252 to 279 (TRSSSPPSLPPRSTPQQQLKLAPPPLIS) form a disordered region. Asparagine 286 carries N-linked (GlcNAc...) asparagine glycosylation. A helical transmembrane segment spans residues 288–308 (SVIIVVVVPIIALLLLFVAFF). The Cytoplasmic segment spans residues 309–676 (SLRAKKTRTN…DASITNVTPR (368 aa)). The 281-residue stretch at 351-631 (FCETNKLGQG…QMLTTSSIAL (281 aa)) folds into the Protein kinase domain. Residues 357 to 365 (LGQGGFGEV) and lysine 379 each bind ATP. Residue tyrosine 424 is modified to Phosphotyrosine. The active-site Proton acceptor is aspartate 476. A Phosphothreonine modification is found at threonine 516. At tyrosine 524 the chain carries Phosphotyrosine.

This sequence belongs to the protein kinase superfamily. Ser/Thr protein kinase family. CRK subfamily.

It is found in the membrane. It carries out the reaction L-seryl-[protein] + ATP = O-phospho-L-seryl-[protein] + ADP + H(+). It catalyses the reaction L-threonyl-[protein] + ATP = O-phospho-L-threonyl-[protein] + ADP + H(+). The polypeptide is Cysteine-rich receptor-like protein kinase 4 (CRK4) (Arabidopsis thaliana (Mouse-ear cress)).